The primary structure comprises 231 residues: Ribose-5-phosphate isomerase A (231 aa).

Substrate-binding positions include 31 to 34 (TGST), 86 to 89 (DGAD), and 100 to 103 (KGLG). Glu109 acts as the Proton acceptor in catalysis. Position 127 (Lys127) interacts with substrate.

The protein belongs to the ribose 5-phosphate isomerase family. In terms of assembly, homodimer.

It carries out the reaction aldehydo-D-ribose 5-phosphate = D-ribulose 5-phosphate. It functions in the pathway carbohydrate degradation; pentose phosphate pathway; D-ribose 5-phosphate from D-ribulose 5-phosphate (non-oxidative stage): step 1/1. Catalyzes the reversible conversion of ribose-5-phosphate to ribulose 5-phosphate. This chain is Ribose-5-phosphate isomerase A, found in Gluconobacter oxydans (strain 621H) (Gluconobacter suboxydans).